The sequence spans 101 residues: Secreted enzymes activator (101 aa).

The span at 1-10 shows a compositional bias: basic residues; it reads MSRRRRRASA. Disordered stretches follow at residues 1-26 and 45-101; these read MSRRRRRASATRRSAAVSPPHTPYGS and TRLA…NGRG. Positions 45-60 are enriched in low complexity; the sequence is TRLAASSRASRAAVGS. A DNA-binding region (H-T-H motif) is located at residues 55–74; the sequence is RAAVGSFDGAKNRPASSRRQ.

Its function is as follows. Increases the production of several extracellular enzymes, like alkaline phosphatase, amylase, protease or lipase. When present in high concentrations, delays the production of pigments and sporulation. The sequence is that of Secreted enzymes activator (saf) from Streptomyces griseus.